The sequence spans 314 residues: Peroxidase 2 (314 aa).

An N-terminal signal peptide occupies residues 1-23 (MASASSVSLMLLVAAAMASAASA). Q24 carries the post-translational modification Pyrrolidone carboxylic acid. 4 cysteine pairs are disulfide-bonded: C34–C109, C67–C72, C115–C310, and C194–C219. Catalysis depends on H65, which acts as the Proton acceptor. Positions 66, 69, 71, 73, and 75 each coordinate Ca(2+). N-linked (GlcNAc...) asparagine glycosylation is present at N148. P157 lines the substrate pocket. N-linked (GlcNAc...) asparagine glycosylation occurs at N169. H187 contributes to the heme b binding site. T188 serves as a coordination point for Ca(2+). N203 carries N-linked (GlcNAc...) asparagine glycosylation. Ca(2+) is bound by residues D234, T237, and D242. 2 N-linked (GlcNAc...) asparagine glycosylation sites follow: N274 and N309.

It belongs to the peroxidase family. Classical plant (class III) peroxidase subfamily. Requires Ca(2+) as cofactor. Heme b serves as cofactor.

Its subcellular location is the secreted. The catalysed reaction is 2 a phenolic donor + H2O2 = 2 a phenolic radical donor + 2 H2O. Functionally, removal of H(2)O(2), oxidation of toxic reductants, biosynthesis and degradation of lignin, suberization, auxin catabolism, response to environmental stresses such as wounding, pathogen attack and oxidative stress. These functions might be dependent on each isozyme/isoform in each plant tissue. This chain is Peroxidase 2 (PRX112), found in Oryza sativa subsp. japonica (Rice).